We begin with the raw amino-acid sequence, 101 residues long: Urease subunit beta (101 aa).

This sequence belongs to the urease beta subunit family. Heterotrimer of UreA (gamma), UreB (beta) and UreC (alpha) subunits. Three heterotrimers associate to form the active enzyme.

The protein resides in the cytoplasm. The catalysed reaction is urea + 2 H2O + H(+) = hydrogencarbonate + 2 NH4(+). The protein operates within nitrogen metabolism; urea degradation; CO(2) and NH(3) from urea (urease route): step 1/1. The protein is Urease subunit beta of Burkholderia mallei (strain NCTC 10247).